A 303-amino-acid polypeptide reads, in one-letter code: Glycine--tRNA ligase alpha subunit (303 aa).

This sequence belongs to the class-II aminoacyl-tRNA synthetase family. In terms of assembly, tetramer of two alpha and two beta subunits.

The protein localises to the cytoplasm. The enzyme catalyses tRNA(Gly) + glycine + ATP = glycyl-tRNA(Gly) + AMP + diphosphate. This Streptococcus equi subsp. zooepidemicus (strain H70) protein is Glycine--tRNA ligase alpha subunit.